The primary structure comprises 362 residues: Putative lipoprotein YdaJ (362 aa).

Residues 1–20 (MRHVLIAVILFFLSIGLSAG) form the signal peptide. Cysteine 21 carries the N-palmitoyl cysteine lipid modification. A lipid anchor (S-diacylglycerol cysteine) is attached at cysteine 21.

Its subcellular location is the cell membrane. The chain is Putative lipoprotein YdaJ (ydaJ) from Bacillus subtilis (strain 168).